A 341-amino-acid chain; its full sequence is Uroporphyrinogen decarboxylase (341 aa).

Substrate is bound by residues 26-30, aspartate 75, tyrosine 150, serine 205, and histidine 318; that span reads RQAGR.

This sequence belongs to the uroporphyrinogen decarboxylase family. As to quaternary structure, homodimer.

The protein resides in the cytoplasm. It catalyses the reaction uroporphyrinogen III + 4 H(+) = coproporphyrinogen III + 4 CO2. It functions in the pathway porphyrin-containing compound metabolism; protoporphyrin-IX biosynthesis; coproporphyrinogen-III from 5-aminolevulinate: step 4/4. In terms of biological role, catalyzes the decarboxylation of four acetate groups of uroporphyrinogen-III to yield coproporphyrinogen-III. The sequence is that of Uroporphyrinogen decarboxylase from Thermus thermophilus (strain ATCC BAA-163 / DSM 7039 / HB27).